The following is a 143-amino-acid chain: Large ribosomal subunit protein uL11 (143 aa).

Belongs to the universal ribosomal protein uL11 family. As to quaternary structure, part of the ribosomal stalk of the 50S ribosomal subunit. Interacts with L10 and the large rRNA to form the base of the stalk. L10 forms an elongated spine to which L12 dimers bind in a sequential fashion forming a multimeric L10(L12)X complex. Post-translationally, one or more lysine residues are methylated.

In terms of biological role, forms part of the ribosomal stalk which helps the ribosome interact with GTP-bound translation factors. This Azoarcus sp. (strain BH72) protein is Large ribosomal subunit protein uL11.